Reading from the N-terminus, the 186-residue chain is Hydra actinoporin-like toxin 5 (186 aa).

An N-terminal signal peptide occupies residues 1 to 20; sequence MLLYVCLVNLLLQSPSGVDS. The Cell attachment site motif lies at 158-160; it reads RDG.

This sequence belongs to the actinoporin family. HALT subfamily. In terms of assembly, octamer or nonamer in membranes. Monomer in the soluble state. In vitro, interacts with folate receptor alpha (of target organism).

The protein resides in the nematocyst. Its subcellular location is the secreted. It is found in the target cell membrane. Its function is as follows. Pore-forming protein that forms hydrophilic pores and causes cytolysis. Compared to equinatoxin-2 (AC P61914), it reveals lower cytolysis activity (5-12-fold difference, tested on erythrocytes), a larger pore size (probably 2-3 nm) and different affinity to membrane lipids (100-fold lower affinity to sphingomyelin). Binds to sulfatides (SFT) as well as to the two sphingolipids, lysophosphatidic acid (LPA) and sphingosine-1-phosphate (S1P). It seems to bind more strongly to LPA than to S1P and SFT. Shows cytolytic activity on HeLa cells, with a different potency than its paralogs (from most potent to less potent: HALT-4&gt;HALT-6~HALT-1&gt;HALT-3&gt;HALT-7&gt;HALT-2). Pore formation is a multi-step process that involves specific recognition of membrane lipid by a protein aromatic residues rich region, firm binding to the membrane (mainly driven by hydrophobic interactions) accompanied by the transfer of the N-terminal region to the lipid-water interface and finally pore formation after oligomerization of monomers. In vitro, binds to the folate receptor alpha (FOLR1), a GPI-anchored membrane protein that plays a major role in the uptake of folate/folic acid into cells via endocytosis, suggesting a possible involvement of this receptor in the mechanism of HALT-1-induced cell lysis. In vivo, does not cause visible paralysis in larvae of the blowfly Sarcophaga faculata, the most common arthropod prey of Hydra. The polypeptide is Hydra actinoporin-like toxin 5 (Hydra vulgaris (Hydra)).